The primary structure comprises 108 residues: uncharacterized protein (108 aa).

To H.influenzae HI_0341.

This is an uncharacterized protein from Escherichia coli (strain K12).